The sequence spans 350 residues: Phenylalanine--tRNA ligase alpha subunit (350 aa).

Glu257 is a binding site for Mg(2+).

It belongs to the class-II aminoacyl-tRNA synthetase family. Phe-tRNA synthetase alpha subunit type 1 subfamily. As to quaternary structure, tetramer of two alpha and two beta subunits. Mg(2+) serves as cofactor.

It is found in the cytoplasm. The catalysed reaction is tRNA(Phe) + L-phenylalanine + ATP = L-phenylalanyl-tRNA(Phe) + AMP + diphosphate + H(+). The protein is Phenylalanine--tRNA ligase alpha subunit of Listeria monocytogenes serovar 1/2a (strain ATCC BAA-679 / EGD-e).